Here is a 347-residue protein sequence, read N- to C-terminus: Very-long-chain 3-oxoacyl-CoA reductase (347 aa).

A helical membrane pass occupies residues 22–42; the sequence is LLWSIFGFGVLKATTLILRIM. NADP(+) is bound by residues V68, D122, N149, Y223, K227, V256, and S258. Residue Y223 is the Proton donor of the active site. Catalysis depends on K227, which acts as the Lowers pKa of active site Tyr.

It belongs to the short-chain dehydrogenases/reductases (SDR) family.

The protein resides in the endoplasmic reticulum membrane. It catalyses the reaction a very-long-chain (3R)-3-hydroxyacyl-CoA + NADP(+) = a very-long-chain 3-oxoacyl-CoA + NADPH + H(+). It functions in the pathway lipid metabolism; fatty acid biosynthesis. Component of the microsomal membrane bound fatty acid elongation system, which produces the 26-carbon very long-chain fatty acids (VLCFA) from palmitate. Catalyzes the reduction of the 3-ketoacyl-CoA intermediate that is formed in each cycle of fatty acid elongation. VLCFAs serve as precursors for ceramide and sphingolipids. The polypeptide is Very-long-chain 3-oxoacyl-CoA reductase (Vanderwaltozyma polyspora (strain ATCC 22028 / DSM 70294 / BCRC 21397 / CBS 2163 / NBRC 10782 / NRRL Y-8283 / UCD 57-17) (Kluyveromyces polysporus)).